We begin with the raw amino-acid sequence, 1964 residues long: Probable helicase with zinc finger domain (1964 aa).

The C3H1-type zinc finger occupies 178–206 (SEEYTLCKRFLEQGICRYGAQCTSAHSQE). A Phosphoserine modification is found at Ser248. 668-675 (GPYGTGKT) contacts ATP. The DEAA box motif lies at 794–797 (DEAA). Polar residues predominate over residues 1116–1127 (HSGNSSRQQQSP). A disordered region spans residues 1116–1135 (HSGNSSRQQQSPPKVKSLYH). Thr1163 is modified (phosphothreonine). Residue Arg1245 is modified to Omega-N-methylarginine. 6 disordered regions span residues 1248-1350 (PIPY…LPAP), 1360-1379 (HFHP…QPHT), 1388-1449 (LPEQ…QAGP), 1463-1491 (QSPA…RAIT), 1631-1655 (QVQP…QFAN), and 1743-1964 (QHAA…SYFK). 2 stretches are compositionally biased toward basic and acidic residues: residues 1268-1281 (HAEK…RNGK) and 1292-1308 (NKIR…KQVD). Residues 1365–1374 (PQLPRPPFPA) show a composition bias toward pro residues. Positions 1388-1431 (LPEQPNQMAPQPNQVAPQPNQMTPQPNQVAPQPNQVVQQQSQAP) are enriched in low complexity. Residues 1635 to 1644 (RSPPAVPSPP) show a composition bias toward pro residues. Residues Ser1636, Ser1760, Ser1763, and Ser1788 each carry the phosphoserine modification. Positions 1755-1765 (SSRTVSASSLP) are enriched in polar residues. Polar residues-rich tracts occupy residues 1799–1813 (PQDS…QGHS) and 1826–1849 (WANT…TSQP). Over residues 1860-1870 (KPPEDQLKPES) the composition is skewed to basic and acidic residues. Polar residues-rich tracts occupy residues 1872 to 1881 (EVSSSFNYSM) and 1897 to 1910 (IAES…QSPA). Low complexity predominate over residues 1941-1956 (PLSLLQELSLGSSPGS).

The protein belongs to the DNA2/NAM7 helicase family. Interacts with POLR2A. Interacts with SMYD3; the interaction may bridge SMYD3 and RNA polymerase II. Interacts with SMYD2.

Its subcellular location is the nucleus. May act as a helicase that plays a role in RNA metabolism in multiple tissues and organs within the developing embryo. The chain is Probable helicase with zinc finger domain (Helz) from Mus musculus (Mouse).